A 122-amino-acid polypeptide reads, in one-letter code: NADH-quinone oxidoreductase subunit A (122 aa).

Transmembrane regions (helical) follow at residues 10-30 (MIVG…LTLG), 66-86 (IFAL…PWAV), and 91-111 (LGLF…IGLA).

The protein belongs to the complex I subunit 3 family. As to quaternary structure, NDH-1 is composed of 14 different subunits. Subunits NuoA, H, J, K, L, M, N constitute the membrane sector of the complex.

It is found in the cell membrane. It catalyses the reaction a quinone + NADH + 5 H(+)(in) = a quinol + NAD(+) + 4 H(+)(out). In terms of biological role, NDH-1 shuttles electrons from NADH, via FMN and iron-sulfur (Fe-S) centers, to quinones in the respiratory chain. The immediate electron acceptor for the enzyme in this species is believed to be a menaquinone. Couples the redox reaction to proton translocation (for every two electrons transferred, four hydrogen ions are translocated across the cytoplasmic membrane), and thus conserves the redox energy in a proton gradient. The chain is NADH-quinone oxidoreductase subunit A from Bacillus cytotoxicus (strain DSM 22905 / CIP 110041 / 391-98 / NVH 391-98).